Reading from the N-terminus, the 73-residue chain is Homeodomain-only protein (73 aa).

The homeobox; degenerate DNA-binding region spans 3–62 (AETASGPTEDQVEILEYNFNKVDKHPDSTTLCLIAAEAGLSEEETQKWFKQRLAKWRRSE).

Interacts with serum response factor (SRF). Component of a large complex containing histone deacetylases such as HDAC2. Interacts with the acetylated forms of HSPA1A and HSPA1B. Interacts with HSPA8. As to expression, widely expressed. Expressed in the heart, brain, placenta, lung, skeletal and smooth muscles, uterus, urinary bladder, kidney and spleen. Down-regulated in some types of cancer such as lung cancer, choriocarcinoma, head and neck squamous cell carcinoma and oral squamous cell carcinoma.

The protein resides in the nucleus. Its subcellular location is the cytoplasm. In terms of biological role, atypical homeodomain protein which does not bind DNA and is required to modulate cardiac growth and development. Acts via its interaction with SRF, thereby modulating the expression of SRF-dependent cardiac-specific genes and cardiac development. Prevents SRF-dependent transcription either by inhibiting SRF binding to DNA or by recruiting histone deacetylase (HDAC) proteins that prevent transcription by SRF. Overexpression causes cardiac hypertrophy. May act as a tumor suppressor. Acts as a co-chaperone for HSPA1A and HSPA1B chaperone proteins and assists in chaperone-mediated protein refolding. The polypeptide is Homeodomain-only protein (HOPX) (Homo sapiens (Human)).